Here is an 80-residue protein sequence, read N- to C-terminus: Spermatid-specific protein S2 (80 aa).

A compositionally biased stretch (basic residues) spans 1–36 (VKSRYHQRQYRARKRYAKARRTKKPKRRPKPPRKLR). Positions 1 to 44 (VKSRYHQRQYRARKRYAKARRTKKPKRRPKPPRKLRYAPSKKQP) are disordered.

Its subcellular location is the nucleus. The protein localises to the chromosome. Functionally, involved in nuclear basic protein transition: histones are replaced by spermatid specific proteins which are themselves replaced by protamines in late spermatids. In Scyliorhinus canicula (Small-spotted catshark), this protein is Spermatid-specific protein S2.